A 23-amino-acid polypeptide reads, in one-letter code: Laccase-1 (23 aa).

This sequence belongs to the multicopper oxidase family. The cofactor is Cu cation.

It localises to the secreted. The catalysed reaction is 4 hydroquinone + O2 = 4 benzosemiquinone + 2 H2O. Strongly inhibited by sodium azide, sodium cyanide, Li(+), Sn(+), Hg(2+), and the disulfide-reducing agents beta-mercaptoethanol, dithiothreitol and thioglycolic acid. Moderately inhibited by Mn(2+) and Fe(2+), inhibition by these metal ions is stronger at 0.1 mM than at 1 mM. Moderately inhibited by Cu(2+). Lignin degradation and detoxification of lignin-derived products. Demethylates eucalyptus hard wood lignin. Has high activity against the non-phenolic heterocyclic compound ABTS, and lower activity against the phenolic substrates syringic acid, caffeic acid, syringaldazine, vanillic acid, catechol and levodihydroxyphenylalanine. In Galerina sp, this protein is Laccase-1.